Here is a 227-residue protein sequence, read N- to C-terminus: Phosphatidylethanolamine-binding protein 4 (227 aa).

A signal peptide spans 1-22 (MGWTMRLVTAALLLGLMMVVTG). N-linked (GlcNAc...) (complex) asparagine glycosylation is present at N169. The interval 188 to 227 (EPEASTQFMTQNYQDSPTLQAPRERASEPKHKNQAEIAAC) is important for secretion. Positions 202-227 (DSPTLQAPRERASEPKHKNQAEIAAC) are disordered. Basic and acidic residues predominate over residues 209–221 (PRERASEPKHKNQ).

The protein belongs to the phosphatidylethanolamine-binding protein family.

The protein localises to the secreted. Functionally, promotes AKT phosphorylation, suggesting a possible role in the PI3K-AKT signaling pathway. The chain is Phosphatidylethanolamine-binding protein 4 (PEBP4) from Homo sapiens (Human).